We begin with the raw amino-acid sequence, 804 residues long: Leucine--tRNA ligase (804 aa).

The 'HIGH' region motif lies at 39–50 (PFPSGKGLHVGH). The 'KMSKS' region motif lies at 573–577 (KMSKS). Residue lysine 576 participates in ATP binding.

This sequence belongs to the class-I aminoacyl-tRNA synthetase family.

It localises to the cytoplasm. It catalyses the reaction tRNA(Leu) + L-leucine + ATP = L-leucyl-tRNA(Leu) + AMP + diphosphate. The protein is Leucine--tRNA ligase of Lactobacillus johnsonii (strain CNCM I-12250 / La1 / NCC 533).